Here is an 807-residue protein sequence, read N- to C-terminus: Glycerol-3-phosphate acyltransferase (807 aa).

The HXXXXD motif motif lies at 305–310; it reads CHRSHM.

The protein belongs to the GPAT/DAPAT family.

It localises to the cell inner membrane. It catalyses the reaction sn-glycerol 3-phosphate + an acyl-CoA = a 1-acyl-sn-glycero-3-phosphate + CoA. It functions in the pathway phospholipid metabolism; CDP-diacylglycerol biosynthesis; CDP-diacylglycerol from sn-glycerol 3-phosphate: step 1/3. The protein is Glycerol-3-phosphate acyltransferase of Escherichia coli O139:H28 (strain E24377A / ETEC).